Here is a 205-residue protein sequence, read N- to C-terminus: uncharacterized protein (205 aa).

The first 40 residues, 1–40 (MSAGKSYRKKMKQRRMNMKISKYALGILMLSLVFVLSACG), serve as a signal peptide directing secretion. Residues 44–82 (STKESTHDNHSDSSTHEEMDHSGSADVPEGLQESKNPKY) form a disordered region. Residues 47-66 (ESTHDNHSDSSTHEEMDHSG) show a composition bias toward basic and acidic residues.

This is an uncharacterized protein from Bacillus subtilis (strain 168).